The following is a 1049-amino-acid chain: Multidrug efflux pump subunit AcrB (1049 aa).

The Cytoplasmic portion of the chain corresponds to 1-9 (MPNFFIDRP). Residues 10 to 28 (IFAWVIAIIIMLAGGLAIL) traverse the membrane as a helical segment. Over 29–336 (KLPVAQYPTI…YDTTPFVKIS (308 aa)) the chain is Periplasmic. Residues 337 to 356 (IHEVVKTLVEAIILVFLVMY) traverse the membrane as a helical segment. Over 357-365 (LFLQNFRAT) the chain is Cytoplasmic. Residues 366 to 385 (LIPTIAVPVVLLGTFAVLAA) form a helical membrane-spanning segment. Over 386–391 (FGFSIN) the chain is Periplasmic. A helical membrane pass occupies residues 392-413 (TLTMFGMVLAIGLLVDDAIVVV). Topologically, residues 414–438 (ENVERVMAEEGLPPKEATRKSMGQI) are cytoplasmic. A helical membrane pass occupies residues 439–457 (QGALVGIAMVLSAVFVPMA). Residues 458-465 (FFGGSTGA) are Periplasmic-facing. The helical transmembrane segment at 466–490 (IYRQFSITIVSAMALSVLVALILTP) threads the bilayer. The Cytoplasmic portion of the chain corresponds to 491–538 (ALCATMLKPIAKGDHGEGKKGFFGWFNRMFEKSTHHYTDSVGGILRST). The helical transmembrane segment at 539 to 555 (GRYLVLYLIIVVGMAYL) threads the bilayer. Over 556–871 (FVRLPSSFLP…MSYQERLSGN (316 aa)) the chain is Periplasmic. Residues 872-888 (QAPSLYAISLIVVFLCL) form a helical membrane-spanning segment. Residues 889–898 (AALYESWSIP) are Cytoplasmic-facing. Residues 899-918 (FSVMLVVPLGVIGALLAATF) traverse the membrane as a helical segment. At 919–924 (RGLTND) the chain is on the periplasmic side. The helical transmembrane segment at 925-943 (VYFQVGLLTTIGLSAKNAI) threads the bilayer. Residues 944-972 (LIVEFAKDLMDKEGKGLIEATLDAVRMRL) are Cytoplasmic-facing. A helical transmembrane segment spans residues 973-992 (RPILMTSLAFILGVMPLVIS). Topologically, residues 993-998 (TGAGSG) are periplasmic. Residues 999–1018 (AQNAVGTGVMGGMVTATVLA) traverse the membrane as a helical segment. The Cytoplasmic segment spans residues 1019 to 1049 (IFFVPVFFVVVRRRFSRKNEDIEHSHTVDHH).

Belongs to the resistance-nodulation-cell division (RND) (TC 2.A.6) family. Homotrimer, with large domains that extend into the periplasm, interacts with AcrA and TolC. AcrA may be required to stably link this protein and TolC. Interacts with AcrZ. Part of the AcrA-AcrB-AcrZ-TolC efflux pump.

The protein resides in the cell inner membrane. Its function is as follows. AcrA-AcrB-AcrZ-TolC is a drug efflux protein complex with broad substrate specificity that uses the proton motive force to export substrates. (Microbial infection) Involved in contact-dependent growth inhibition (CDI), acts downstream of BamA, the receptor for CDI. Its role in CDI is independent of the AcrA-AcrB-TolC efflux pump complex. This is Multidrug efflux pump subunit AcrB (acrB) from Escherichia coli (strain K12).